We begin with the raw amino-acid sequence, 116 residues long: POU domain, class 4, transcription factor 1 (116 aa).

The POU-specific domain occupies 1–54; that stretch reads VTQADVGSALANLKIPGVGSLSQSTICRFESLTLSHNNMIALKPILQAWLEEAE. The disordered stretch occupies residues 56–79; the sequence is AQREKMNKPELFNGGEKKRKRTSI. A DNA-binding region (homeobox) is located at residues 72-116; that stretch reads KKRKRTSIAAPEKRSLEAYFAVQPRPSSEKIAAIAEKLDLKKNVV.

This sequence belongs to the POU transcription factor family. Class-4 subfamily.

The protein resides in the nucleus. The protein localises to the cytoplasm. Its function is as follows. Multifunctional transcription factor with different regions mediating its different effects. Acts by binding (via its C-terminal domain) to sequences related to the consensus octamer motif 5'-ATGCAAAT-3' in the regulatory regions of its target genes. Regulates the expression of specific genes involved in differentiation and survival within a subset of neuronal lineages. It has been shown that activation of some of these genes requires its N-terminal domain, maybe through a neuronal-specific cofactor. This chain is POU domain, class 4, transcription factor 1 (POU4F1), found in Gallus gallus (Chicken).